A 252-amino-acid chain; its full sequence is Isoprenyl transferase (252 aa).

Asp28 is an active-site residue. Mg(2+) is bound at residue Asp28. Residues 29 to 32 (GNGR), Trp33, Arg41, His45, and 73 to 75 (STE) contribute to the substrate site. Asn76 acts as the Proton acceptor in catalysis. Substrate contacts are provided by residues Trp77, Arg79, Arg200, and 206–208 (RLS). Glu219 serves as a coordination point for Mg(2+).

This sequence belongs to the UPP synthase family. Homodimer. The cofactor is Mg(2+).

Functionally, catalyzes the condensation of isopentenyl diphosphate (IPP) with allylic pyrophosphates generating different type of terpenoids. The polypeptide is Isoprenyl transferase (Streptococcus pneumoniae serotype 4 (strain ATCC BAA-334 / TIGR4)).